Reading from the N-terminus, the 428-residue chain is Putative F-box protein At3g22421 (428 aa).

An F-box domain is found at Thr4 to Glu50.

The polypeptide is Putative F-box protein At3g22421 (Arabidopsis thaliana (Mouse-ear cress)).